Consider the following 90-residue polypeptide: uncharacterized protein (90 aa).

This is an uncharacterized protein from Mycoplasma genitalium (strain ATCC 33530 / DSM 19775 / NCTC 10195 / G37) (Mycoplasmoides genitalium).